Here is a 270-residue protein sequence, read N- to C-terminus: Formamidopyrimidine-DNA glycosylase (270 aa).

Pro2 (schiff-base intermediate with DNA) is an active-site residue. Glu3 (proton donor) is an active-site residue. The active-site Proton donor; for beta-elimination activity is the Lys58. DNA contacts are provided by His90, Arg109, and Arg152. The segment at 237–270 (RVYGREGEACECGGAIVRVVQSGRSTFYCRKCQR) adopts an FPG-type zinc-finger fold. Residue Arg260 is the Proton donor; for delta-elimination activity of the active site.

The protein belongs to the FPG family. As to quaternary structure, monomer. The cofactor is Zn(2+).

It catalyses the reaction Hydrolysis of DNA containing ring-opened 7-methylguanine residues, releasing 2,6-diamino-4-hydroxy-5-(N-methyl)formamidopyrimidine.. It carries out the reaction 2'-deoxyribonucleotide-(2'-deoxyribose 5'-phosphate)-2'-deoxyribonucleotide-DNA = a 3'-end 2'-deoxyribonucleotide-(2,3-dehydro-2,3-deoxyribose 5'-phosphate)-DNA + a 5'-end 5'-phospho-2'-deoxyribonucleoside-DNA + H(+). Involved in base excision repair of DNA damaged by oxidation or by mutagenic agents. Acts as a DNA glycosylase that recognizes and removes damaged bases. Has a preference for oxidized purines, such as 7,8-dihydro-8-oxoguanine (8-oxoG). Has AP (apurinic/apyrimidinic) lyase activity and introduces nicks in the DNA strand. Cleaves the DNA backbone by beta-delta elimination to generate a single-strand break at the site of the removed base with both 3'- and 5'-phosphates. This chain is Formamidopyrimidine-DNA glycosylase, found in Sphingopyxis alaskensis (strain DSM 13593 / LMG 18877 / RB2256) (Sphingomonas alaskensis).